The following is a 234-amino-acid chain: UPF0173 metal-dependent hydrolase Msp_0516 (234 aa).

Belongs to the UPF0173 family.

The sequence is that of UPF0173 metal-dependent hydrolase Msp_0516 from Methanosphaera stadtmanae (strain ATCC 43021 / DSM 3091 / JCM 11832 / MCB-3).